Consider the following 157-residue polypeptide: 2-C-methyl-D-erythritol 2,4-cyclodiphosphate synthase (157 aa).

Residues Asp-8 and His-10 each coordinate a divalent metal cation. 4-CDP-2-C-methyl-D-erythritol 2-phosphate-binding positions include 8 to 10 and 34 to 35; these read DIH and HS. His-42 is a binding site for a divalent metal cation. 4-CDP-2-C-methyl-D-erythritol 2-phosphate-binding positions include 56-58, 61-65, 132-135, and Arg-142; these read DIG, FPDTD, and TTNE.

The protein belongs to the IspF family. As to quaternary structure, homotrimer. The cofactor is a divalent metal cation.

It catalyses the reaction 4-CDP-2-C-methyl-D-erythritol 2-phosphate = 2-C-methyl-D-erythritol 2,4-cyclic diphosphate + CMP. The protein operates within isoprenoid biosynthesis; isopentenyl diphosphate biosynthesis via DXP pathway; isopentenyl diphosphate from 1-deoxy-D-xylulose 5-phosphate: step 4/6. In terms of biological role, involved in the biosynthesis of isopentenyl diphosphate (IPP) and dimethylallyl diphosphate (DMAPP), two major building blocks of isoprenoid compounds. Catalyzes the conversion of 4-diphosphocytidyl-2-C-methyl-D-erythritol 2-phosphate (CDP-ME2P) to 2-C-methyl-D-erythritol 2,4-cyclodiphosphate (ME-CPP) with a corresponding release of cytidine 5-monophosphate (CMP). In Chloroherpeton thalassium (strain ATCC 35110 / GB-78), this protein is 2-C-methyl-D-erythritol 2,4-cyclodiphosphate synthase.